The sequence spans 570 residues: Nucleoprotein (570 aa).

The tract at residues 54–241 (MRKQKRDDGD…IDTKKSSLNI (188 aa)) is binding site for the cap structure m7GTP. 2 residues coordinate Mn(2+): Asp-390 and Glu-392. Glu-400, Cys-507, His-510, and Cys-530 together coordinate Zn(2+). Asp-534 provides a ligand contact to Mn(2+).

The protein belongs to the arenaviridae nucleocapsid protein family. In terms of assembly, homomultimerizes to form the nucleocapsid. Binds to viral genomic RNA. Interacts with glycoprotein G2. Interacts with protein Z; this interaction probably directs the encapsidated genome to budding sites. Interacts with protein L; this interaction does not interfere with Z-L interaction. Interacts with host IKBKE (via Protein kinase domain); the interaction inhibits IKBKE kinase activity.

The protein resides in the virion. It is found in the host cytoplasm. In terms of biological role, encapsidates the genome, protecting it from nucleases. The encapsidated genomic RNA is termed the nucleocapsid (NC). Serves as template for viral transcription and replication. The increased presence of protein N in host cell does not seem to trigger the switch from transcription to replication as observed in other negative strain RNA viruses. Through the interaction with host IKBKE, strongly inhibits the phosphorylation and nuclear translocation of host IRF3, a protein involved in interferon activation pathway, leading to the inhibition of interferon-beta and IRF3-dependent promoters activation. Also encodes a functional 3'-5' exoribonuclease that degrades preferentially dsRNA substrates and thereby participates in the suppression of interferon induction. This chain is Nucleoprotein, found in Homo sapiens (Human).